The chain runs to 138 residues: Large ribosomal subunit protein uL16 (138 aa).

Over residues 1–13 the composition is skewed to basic residues; it reads MLQPKRRKYRKEQ. Positions 1–20 are disordered; sequence MLQPKRRKYRKEQKGRNTGI.

It belongs to the universal ribosomal protein uL16 family. As to quaternary structure, part of the 50S ribosomal subunit.

Binds 23S rRNA and is also seen to make contacts with the A and possibly P site tRNAs. This is Large ribosomal subunit protein uL16 from Ralstonia nicotianae (strain ATCC BAA-1114 / GMI1000) (Ralstonia solanacearum).